Here is a 185-residue protein sequence, read N- to C-terminus: MACPNWRVRLAARIIRGGGVIAYPTEGVFGLGCDPGRKAAIERILQLKGRSISKGFILIAADFVQLQSYLLPLTASTRSRLEVTWPGPVTWLLPARGDVPPWLRGRYDTLAVRVTAHPLAACLCRTLGHALVSTSANRAGRPPAQTTLQVRRSFGSSLDYILPGITGKRAGPSEIRDGRTGQRLR.

The 181-residue stretch at 5-185 folds into the YrdC-like domain; the sequence is NWRVRLAARI…RDGRTGQRLR (181 aa).

Belongs to the SUA5 family. TsaC subfamily.

Its subcellular location is the cytoplasm. It catalyses the reaction L-threonine + hydrogencarbonate + ATP = L-threonylcarbamoyladenylate + diphosphate + H2O. In terms of biological role, required for the formation of a threonylcarbamoyl group on adenosine at position 37 (t(6)A37) in tRNAs that read codons beginning with adenine. Catalyzes the conversion of L-threonine, HCO(3)(-)/CO(2) and ATP to give threonylcarbamoyl-AMP (TC-AMP) as the acyladenylate intermediate, with the release of diphosphate. The polypeptide is Threonylcarbamoyl-AMP synthase (Nitrosococcus oceani (strain ATCC 19707 / BCRC 17464 / JCM 30415 / NCIMB 11848 / C-107)).